Consider the following 272-residue polypeptide: Putative hydro-lyase AZC_4080 (272 aa).

Belongs to the D-glutamate cyclase family.

The protein is Putative hydro-lyase AZC_4080 of Azorhizobium caulinodans (strain ATCC 43989 / DSM 5975 / JCM 20966 / LMG 6465 / NBRC 14845 / NCIMB 13405 / ORS 571).